Consider the following 467-residue polypeptide: MATRSCREKAQKLNEQHQLILSKLLREEDNKYCADCEAKGPRWASWNIGVFICIRCAGIHRNLGVHISRVKSVNLDQWTAEQIQCMQDMGNTKARLLYEANLPENFRRPQTDQAVEFFIRDKYEKKKYYDKNAIAITNISSSDAPLQPLVSSPSLQAAVDKNKLEKEKEKKKEEKKREKEPEKPAKPLTAEKLQKKDQQLEPKKSTSPKKAAEPTVDLLGLDGPAVAPVTNGNTTVPPLNDDLDIFGPMISNPLPATVMPPAQGTPSAPAAATLSTVTSGDLDLFTEQTTKSEEVAKKQLSKDSILSLYGTGTIQQQSTPGVFMGPTNIPFTSQAPAAFQGFPSMGVPVPAAPGLIGNVMGQSPSMMVGMPMPNGFMGNAQTGVMPLPQNVVGPQGGMVGQMGAPQSKFGLPQAQQPQWSLSQMNQQMAGMSISSATPTAGFGQPSSTTAGWSGSSSGQTLSTQLWK.

One can recognise an Arf-GAP domain in the interval 18–136 (QLILSKLLRE…KYYDKNAIAI (119 aa)). The C4-type zinc-finger motif lies at 33 to 56 (CADCEAKGPRWASWNIGVFICIRC). Residues 145–155 (PLQPLVSSPSL) show a composition bias toward polar residues. Disordered stretches follow at residues 145–224 (PLQP…LDGP) and 408–467 (KFGL…QLWK). Basic and acidic residues-rich tracts occupy residues 160-185 (DKNK…EKPA) and 192-204 (KLQK…EPKK). Residues 218-222 (LLGLD) carry the Interaction with clathrin heavy chains motif. Positions 413 to 438 (QAQQPQWSLSQMNQQMAGMSISSATP) are enriched in polar residues. The span at 446–467 (SSTTAGWSGSSSGQTLSTQLWK) shows a compositional bias: low complexity.

Interacts with ARF6. Interacts with clathrin heavy chains via the clathrin box-like motif. Detected in bone marrow, adrenal gland, trachea, lymph node, spinal cord, peripheral blood leukocytes, thyroid and stomach.

The protein localises to the cell membrane. Its function is as follows. GTPase activating protein that acts on ARF6. Plays a role in clathrin-dependent endocytosis. May play a role in erythropoiesis. The sequence is that of Stromal membrane-associated protein 1 (SMAP1) from Homo sapiens (Human).